The chain runs to 398 residues: Proteasome-activating nucleotidase (398 aa).

Residues 18–59 (IMYLKKRIRQLELQVRTLEADKERLERELSRLRMEMSRLRQP) adopt a coiled-coil conformation. ATP is bound by residues 183–188 (GCGKTL) and His-322. The docks into pockets in the proteasome alpha-ring to cause gate opening stretch occupies residues 396-398 (MYG).

The protein belongs to the AAA ATPase family. In terms of assembly, homohexamer. The hexameric complex has a two-ring architecture resembling a top hat that caps the 20S proteasome core at one or both ends. Upon ATP-binding, the C-terminus of PAN interacts with the alpha-rings of the proteasome core by binding to the intersubunit pockets.

Its subcellular location is the cytoplasm. ATPase which is responsible for recognizing, binding, unfolding and translocation of substrate proteins into the archaeal 20S proteasome core particle. Is essential for opening the gate of the 20S proteasome via an interaction with its C-terminus, thereby allowing substrate entry and access to the site of proteolysis. Thus, the C-termini of the proteasomal ATPase function like a 'key in a lock' to induce gate opening and therefore regulate proteolysis. Unfolding activity requires energy from ATP hydrolysis, whereas ATP binding alone promotes ATPase-20S proteasome association which triggers gate opening, and supports translocation of unfolded substrates. The sequence is that of Proteasome-activating nucleotidase from Thermococcus onnurineus (strain NA1).